The sequence spans 712 residues: Polyribonucleotide nucleotidyltransferase (712 aa).

Positions 485 and 491 each coordinate Mg(2+). A KH domain is found at 552-611 (PRIHTMKIDPKKIKDVIGKGGAVIRSLTEETGTSIDIDDDGTVKIAATDNNAAKMVMSRI). The S1 motif domain maps to 621 to 689 (NAIYTGKVSR…RQNRIRLTMK (69 aa)).

This sequence belongs to the polyribonucleotide nucleotidyltransferase family. In terms of assembly, component of the RNA degradosome, which is a multiprotein complex involved in RNA processing and mRNA degradation. Mg(2+) serves as cofactor.

It localises to the cytoplasm. The enzyme catalyses RNA(n+1) + phosphate = RNA(n) + a ribonucleoside 5'-diphosphate. Its function is as follows. Involved in mRNA degradation. Catalyzes the phosphorolysis of single-stranded polyribonucleotides processively in the 3'- to 5'-direction. This Haemophilus ducreyi (strain 35000HP / ATCC 700724) protein is Polyribonucleotide nucleotidyltransferase.